A 403-amino-acid polypeptide reads, in one-letter code: Phosphopentomutase (403 aa).

Residues aspartate 13, aspartate 298, histidine 303, aspartate 339, histidine 340, and histidine 351 each coordinate Mn(2+).

This sequence belongs to the phosphopentomutase family. The cofactor is Mn(2+).

It is found in the cytoplasm. It catalyses the reaction 2-deoxy-alpha-D-ribose 1-phosphate = 2-deoxy-D-ribose 5-phosphate. The catalysed reaction is alpha-D-ribose 1-phosphate = D-ribose 5-phosphate. It participates in carbohydrate degradation; 2-deoxy-D-ribose 1-phosphate degradation; D-glyceraldehyde 3-phosphate and acetaldehyde from 2-deoxy-alpha-D-ribose 1-phosphate: step 1/2. In terms of biological role, isomerase that catalyzes the conversion of deoxy-ribose 1-phosphate (dRib-1-P) and ribose 1-phosphate (Rib-1-P) to deoxy-ribose 5-phosphate (dRib-5-P) and ribose 5-phosphate (Rib-5-P), respectively. This chain is Phosphopentomutase, found in Streptococcus pyogenes serotype M18 (strain MGAS8232).